Reading from the N-terminus, the 273-residue chain is Large ribosomal subunit protein uL2 (273 aa).

Positions 222 to 273 are disordered; sequence GMAMNPVDHPHGGGEGRNKGIQPVSPWGTPAKGYRTRSNKRTDKYIVRRRNK. Positions 229–239 are enriched in basic and acidic residues; that stretch reads DHPHGGGEGRN.

It belongs to the universal ribosomal protein uL2 family. As to quaternary structure, part of the 50S ribosomal subunit. Forms a bridge to the 30S subunit in the 70S ribosome.

Its function is as follows. One of the primary rRNA binding proteins. Required for association of the 30S and 50S subunits to form the 70S ribosome, for tRNA binding and peptide bond formation. It has been suggested to have peptidyltransferase activity; this is somewhat controversial. Makes several contacts with the 16S rRNA in the 70S ribosome. This chain is Large ribosomal subunit protein uL2, found in Tolumonas auensis (strain DSM 9187 / NBRC 110442 / TA 4).